The primary structure comprises 1529 residues: ABC multidrug transporter AFR2 (1529 aa).

The 251-residue stretch at 144-394 (GSLRDLIGNR…FVDMGFHCPS (251 aa)) folds into the ABC transporter 1 domain. N-linked (GlcNAc...) asparagine glycans are attached at residues asparagine 235 and asparagine 318. The next 5 membrane-spanning stretches (helical) occupy residues 510-530 (LFGNFIMALIIGSVFYNLPVT), 539-559 (ALLFFAILMSAFGSALEILIL), 589-609 (IPYKVMNCIIFNLTLYFMTNL), 614-634 (GAYFFFMLISFTLTMVMSMLF), and 648-668 (LAPAALLILGLVMYTGFAVNV). N-linked (GlcNAc...) asparagine glycosylation is present at asparagine 742. A helical membrane pass occupies residues 757–777 (GILIGFFLFFTAIYLTATEFI). The ABC transporter 2 domain maps to 845–1087 (FSWKDVVYDI…ILIDYFEKNG (243 aa)). 881 to 888 (GVSGAGKT) is a binding site for ATP. The next 5 membrane-spanning stretches (helical) occupy residues 1193-1213 (YIWAKVALCSLSGLFIGFSFF), 1229-1249 (VFMMFTIFGQLTQQIMPNFVT), 1268-1288 (IFILSNIVSEIPWAILMGVII), 1314-1334 (LMFLYIEMFLLFNATFSIMIV), and 1353-1373 (MCLIFCGVLASGSSLPGFWVF). An N-linked (GlcNAc...) asparagine glycan is attached at asparagine 1434. The helical transmembrane segment at 1465–1485 (FGLLWVYVVFNVIAAIGIYWL) threads the bilayer. Over residues 1493 to 1505 (GKERASEPEDVQE) the composition is skewed to basic and acidic residues. A disordered region spans residues 1493–1529 (GKERASEPEDVQEKQVPAQSTEKKYQSISRSSESTVA). Polar residues predominate over residues 1518-1529 (QSISRSSESTVA).

This sequence belongs to the ABC transporter superfamily. ABCG family. PDR (TC 3.A.1.205) subfamily.

The protein localises to the cell membrane. The enzyme catalyses itraconazole(in) + ATP + H2O = itraconazole(out) + ADP + phosphate + H(+). It catalyses the reaction voriconazole(in) + ATP + H2O = voriconazole(out) + ADP + phosphate + H(+). The catalysed reaction is fluconazole(in) + ATP + H2O = fluconazole(out) + ADP + phosphate + H(+). In terms of biological role, pleiotropic ABC efflux transporter that confers resistance to structurally and functionally unrelated compounds including azoles such as fluconazole (FLC), itraconazole (ITC), posaconazole (POS), and voriconazole (VRC). This Cryptococcus deuterogattii (strain R265) (Cryptococcus gattii VGII (strain R265)) protein is ABC multidrug transporter AFR2.